The chain runs to 269 residues: NAD kinase (269 aa).

Residue aspartate 45 is the Proton acceptor of the active site. NAD(+) contacts are provided by residues 45-46 (DG), 122-123 (NE), arginine 149, aspartate 151, and alanine 186.

The protein belongs to the NAD kinase family. It depends on a divalent metal cation as a cofactor.

The protein localises to the cytoplasm. The catalysed reaction is NAD(+) + ATP = ADP + NADP(+) + H(+). In terms of biological role, involved in the regulation of the intracellular balance of NAD and NADP, and is a key enzyme in the biosynthesis of NADP. Catalyzes specifically the phosphorylation on 2'-hydroxyl of the adenosine moiety of NAD to yield NADP. This Staphylococcus aureus (strain Mu3 / ATCC 700698) protein is NAD kinase.